Here is a 911-residue protein sequence, read N- to C-terminus: Protein translocase subunit SecA (911 aa).

ATP-binding positions include glutamine 87, 105-109 (GEGKT), and aspartate 499. Positions 895, 897, 906, and 907 each coordinate Zn(2+).

This sequence belongs to the SecA family. In terms of assembly, monomer and homodimer. Part of the essential Sec protein translocation apparatus which comprises SecA, SecYEG and auxiliary proteins SecDF-YajC and YidC. Zn(2+) is required as a cofactor.

It is found in the cell inner membrane. The protein localises to the cytoplasm. It catalyses the reaction ATP + H2O + cellular proteinSide 1 = ADP + phosphate + cellular proteinSide 2.. Its function is as follows. Part of the Sec protein translocase complex. Interacts with the SecYEG preprotein conducting channel. Has a central role in coupling the hydrolysis of ATP to the transfer of proteins into and across the cell membrane, serving both as a receptor for the preprotein-SecB complex and as an ATP-driven molecular motor driving the stepwise translocation of polypeptide chains across the membrane. The sequence is that of Protein translocase subunit SecA from Novosphingobium aromaticivorans (strain ATCC 700278 / DSM 12444 / CCUG 56034 / CIP 105152 / NBRC 16084 / F199).